The primary structure comprises 209 residues: Transcription elongation factor A protein-like 4 (209 aa).

Residue methionine 1 is modified to N-acetylmethionine. The disordered stretch occupies residues 1–125; sequence MEKLYNENEG…VPRKAKRKTN (125 aa). A compositionally biased stretch (basic and acidic residues) spans 25–96; sequence QDERKPEVAC…GSEREGKPES (72 aa). Phosphoserine is present on residues serine 88 and serine 96.

The protein belongs to the TFS-II family. TFA subfamily.

It localises to the nucleus. In terms of biological role, may be involved in transcriptional regulation. The chain is Transcription elongation factor A protein-like 4 (TCEAL4) from Pongo abelii (Sumatran orangutan).